Reading from the N-terminus, the 435-residue chain is Xylose isomerase (435 aa).

Residues H100 and D103 contribute to the active site. Residues E231, E267, H270, D295, D306, D308, and D338 each coordinate Mg(2+).

This sequence belongs to the xylose isomerase family. In terms of assembly, homotetramer. The cofactor is Mg(2+).

Its subcellular location is the cytoplasm. It catalyses the reaction alpha-D-xylose = alpha-D-xylulofuranose. The chain is Xylose isomerase from Brucella suis biovar 1 (strain 1330).